The sequence spans 646 residues: Protein kinase YegI (646 aa).

Residues 13 to 300 enclose the Protein kinase domain; the sequence is VTPGRELGKG…KAWVAALDLL (288 aa). ATP is bound by residues 19 to 27 and Lys-39; that span reads LGKGGEGAV. Asp-141 acts as the Proton acceptor in catalysis.

Post-translationally, autophosphorylated.

In terms of biological role, probable serine/threonine kinase. This is Protein kinase YegI (yegI) from Escherichia coli O157:H7.